A 420-amino-acid polypeptide reads, in one-letter code: Glucose-1-phosphate adenylyltransferase (420 aa).

Alpha-D-glucose 1-phosphate contacts are provided by residues Tyr107, Gly172, 187-188 (EK), and Ser205.

Belongs to the bacterial/plant glucose-1-phosphate adenylyltransferase family. As to quaternary structure, homotetramer.

It carries out the reaction alpha-D-glucose 1-phosphate + ATP + H(+) = ADP-alpha-D-glucose + diphosphate. It participates in glycan biosynthesis; glycogen biosynthesis. Involved in the biosynthesis of ADP-glucose, a building block required for the elongation reactions to produce glycogen. Catalyzes the reaction between ATP and alpha-D-glucose 1-phosphate (G1P) to produce pyrophosphate and ADP-Glc. This is Glucose-1-phosphate adenylyltransferase from Rhizobium etli (strain ATCC 51251 / DSM 11541 / JCM 21823 / NBRC 15573 / CFN 42).